We begin with the raw amino-acid sequence, 1291 residues long: Tat-binding homolog 7 (1291 aa).

Residues 1-345 form a disordered region; it reads MPRSDGFSPR…HNRGERERGR (345 aa). Over residues 64–82 the composition is skewed to basic and acidic residues; the sequence is RYYEEEYHEAISSEEDERR. The segment covering 88 to 99 has biased composition (polar residues); that stretch reads SSNSMTYRQQVM. The span at 226–257 shows a compositional bias: acidic residues; the sequence is EEEEEGAEEDEQSGEKDPEEEEDDSSNAESSE. Positions 298–311 are enriched in basic residues; sequence NRHHRNRNGSRRRR. 432–439 lines the ATP pocket; the sequence is GPPGTGKT. The region spanning 914-1022 is the Bromo domain; the sequence is ALQRQMRLFF…DAIDDLIECE (109 aa). The segment at 1110-1194 is disordered; sequence KSEEGTSTST…MKDASKDSTP (85 aa). A compositionally biased stretch (basic residues) spans 1128 to 1142; it reads NKKKLLKKKKGQKKS. The span at 1148–1164 shows a compositional bias: acidic residues; it reads EEHDEDSTVEDAGEDTI. The span at 1168–1190 shows a compositional bias: basic and acidic residues; it reads LEIKKNQETPNSEHDIEMKDASK.

Belongs to the AAA ATPase family.

Its function is as follows. Thought to form a complex that enhances transcription from repetitive DNA sequences by modulating chromatin structure. The chain is Tat-binding homolog 7 (lex-1) from Caenorhabditis elegans.